The following is a 353-amino-acid chain: Phosphoribosylformylglycinamidine cyclo-ligase (353 aa).

It belongs to the AIR synthase family.

It is found in the cytoplasm. It carries out the reaction 2-formamido-N(1)-(5-O-phospho-beta-D-ribosyl)acetamidine + ATP = 5-amino-1-(5-phospho-beta-D-ribosyl)imidazole + ADP + phosphate + H(+). The protein operates within purine metabolism; IMP biosynthesis via de novo pathway; 5-amino-1-(5-phospho-D-ribosyl)imidazole from N(2)-formyl-N(1)-(5-phospho-D-ribosyl)glycinamide: step 2/2. This chain is Phosphoribosylformylglycinamidine cyclo-ligase, found in Dinoroseobacter shibae (strain DSM 16493 / NCIMB 14021 / DFL 12).